Reading from the N-terminus, the 24-residue chain is AQITLTNKASYTVTPPAQANAADA.

This sequence belongs to the thaumatin family. Homooligomer; disulfide-linked. In terms of processing, glycosylated.

The protein localises to the secreted. Its subcellular location is the extracellular space. The protein resides in the apoplast. This chain is 33.0 kDa cold shock protein, found in Arachis hypogaea (Peanut).